Consider the following 102-residue polypeptide: Urease subunit beta (102 aa).

Belongs to the urease beta subunit family. Heterotrimer of UreA (gamma), UreB (beta) and UreC (alpha) subunits. Three heterotrimers associate to form the active enzyme.

It localises to the cytoplasm. The enzyme catalyses urea + 2 H2O + H(+) = hydrogencarbonate + 2 NH4(+). It functions in the pathway nitrogen metabolism; urea degradation; CO(2) and NH(3) from urea (urease route): step 1/1. The protein is Urease subunit beta of Acinetobacter baumannii (strain ACICU).